A 141-amino-acid polypeptide reads, in one-letter code: Hemoglobin subunit alpha (141 aa).

The region spanning V1–R141 is the Globin domain. Position 3 is a phosphoserine (S3). Residue K7 is modified to N6-succinyllysine. The residue at position 8 (T8) is a Phosphothreonine. At K11 the chain carries N6-succinyllysine. K16 is subject to N6-acetyllysine; alternate. K16 carries the N6-succinyllysine; alternate modification. A Phosphotyrosine modification is found at Y24. Position 35 is a phosphoserine (S35). An N6-succinyllysine modification is found at K40. A Phosphoserine modification is found at S49. O2 is bound at residue H58. H87 lines the heme b pocket. Position 102 is a phosphoserine (S102). The residue at position 108 (T108) is a Phosphothreonine. Phosphoserine is present on S124. Phosphothreonine occurs at positions 134 and 137. A Phosphoserine modification is found at S138.

The protein belongs to the globin family. As to quaternary structure, heterotetramer of two alpha chains and two beta chains. As to expression, red blood cells.

Its function is as follows. Involved in oxygen transport from the lung to the various peripheral tissues. Hemopressin acts as an antagonist peptide of the cannabinoid receptor CNR1. Hemopressin-binding efficiently blocks cannabinoid receptor CNR1 and subsequent signaling. This Ctenodactylus gundi (Northern gundi) protein is Hemoglobin subunit alpha (HBA).